We begin with the raw amino-acid sequence, 186 residues long: Potassium-transporting ATPase KdpC subunit (186 aa).

The chain crosses the membrane as a helical span at residues Leu10–Gly30.

It belongs to the KdpC family. The system is composed of three essential subunits: KdpA, KdpB and KdpC.

The protein localises to the cell membrane. Functionally, part of the high-affinity ATP-driven potassium transport (or Kdp) system, which catalyzes the hydrolysis of ATP coupled with the electrogenic transport of potassium into the cytoplasm. This subunit acts as a catalytic chaperone that increases the ATP-binding affinity of the ATP-hydrolyzing subunit KdpB by the formation of a transient KdpB/KdpC/ATP ternary complex. This chain is Potassium-transporting ATPase KdpC subunit, found in Staphylococcus aureus (strain bovine RF122 / ET3-1).